The sequence spans 237 residues: KH homology domain-containing protein 1 (237 aa).

Transmembrane regions (helical) follow at residues 7 to 29 (RLFR…FIYG) and 33 to 50 (LQTL…HLWI). Residues 96-155 (PMVFHMEEDQEELIFGHGDTYLRCIEVHSHTLIQLESWFTATGQTRVTVVGPHRARQWLL) enclose the KH; atypical domain.

Belongs to the KHDC1 family.

Its subcellular location is the membrane. This chain is KH homology domain-containing protein 1, found in Homo sapiens (Human).